The following is a 465-amino-acid chain: Ribulose bisphosphate carboxylase large chain (465 aa).

Lys-4 bears the N6,N6,N6-trimethyllysine mark. Residues Asn-113 and Thr-163 each contribute to the substrate site. Catalysis depends on Lys-165, which acts as the Proton acceptor. Lys-167 contacts substrate. Lys-191, Asp-193, and Glu-194 together coordinate Mg(2+). Residue Lys-191 is modified to N6-carboxylysine. The active-site Proton acceptor is the His-284. Substrate contacts are provided by Arg-285, His-317, and Ser-369.

Belongs to the RuBisCO large chain family. Type I subfamily. As to quaternary structure, heterohexadecamer of 8 large chains and 8 small chains; disulfide-linked. The disulfide link is formed within the large subunit homodimers. It depends on Mg(2+) as a cofactor. In terms of processing, the disulfide bond which can form in the large chain dimeric partners within the hexadecamer appears to be associated with oxidative stress and protein turnover.

The protein localises to the plastid. Its subcellular location is the chloroplast. The enzyme catalyses 2 (2R)-3-phosphoglycerate + 2 H(+) = D-ribulose 1,5-bisphosphate + CO2 + H2O. It catalyses the reaction D-ribulose 1,5-bisphosphate + O2 = 2-phosphoglycolate + (2R)-3-phosphoglycerate + 2 H(+). RuBisCO catalyzes two reactions: the carboxylation of D-ribulose 1,5-bisphosphate, the primary event in carbon dioxide fixation, as well as the oxidative fragmentation of the pentose substrate in the photorespiration process. Both reactions occur simultaneously and in competition at the same active site. This is Ribulose bisphosphate carboxylase large chain from Cornus florida (Flowering dogwood).